The chain runs to 55 residues: Large ribosomal subunit protein bL33 (55 aa).

The protein belongs to the bacterial ribosomal protein bL33 family.

The polypeptide is Large ribosomal subunit protein bL33 (Photorhabdus laumondii subsp. laumondii (strain DSM 15139 / CIP 105565 / TT01) (Photorhabdus luminescens subsp. laumondii)).